A 307-amino-acid polypeptide reads, in one-letter code: Elongation factor Ts (307 aa).

The tract at residues 80 to 83 is involved in Mg(2+) ion dislocation from EF-Tu; the sequence is TDFV.

Belongs to the EF-Ts family.

It localises to the cytoplasm. Functionally, associates with the EF-Tu.GDP complex and induces the exchange of GDP to GTP. It remains bound to the aminoacyl-tRNA.EF-Tu.GTP complex up to the GTP hydrolysis stage on the ribosome. The chain is Elongation factor Ts from Clostridium botulinum (strain Kyoto / Type A2).